Here is a 389-residue protein sequence, read N- to C-terminus: WAT1-related protein At1g21890 (389 aa).

The next 10 helical transmembrane spans lie at 13-33 (LAMISMQFGYAGMYIITMVSL), 40-60 (YVLAVYRHAIATAVIAPFALF), 73-93 (IFLQIALLGFIEPVLDQNLYY), 102-122 (TFASATANVLPAITFVLAIIF), 142-162 (VITVSGALLMTLYKGPIVDFI), 191-211 (WIPGTLMLLGRTFGWAGFFIL), 225-245 (LTTLICLMGTLEGTAVSLVTV), 260-280 (FAAAYSGVICSGVAYYVQGVV), 287-307 (VFVATFNPLCVVITAALGVVV), and 312-332 (IHLGSVIGTLFIIVGLYTVVW). EamA domains are found at residues 23–150 (AGMY…GALL) and 205–331 (WAGF…YTVV). The segment at 339 to 361 (RMTDDDEDCKGLPIKSPVKPVDT) is disordered.

This sequence belongs to the drug/metabolite transporter (DMT) superfamily. Plant drug/metabolite exporter (P-DME) (TC 2.A.7.4) family.

The protein localises to the membrane. This is WAT1-related protein At1g21890 from Arabidopsis thaliana (Mouse-ear cress).